A 141-amino-acid chain; its full sequence is Nucleoside diphosphate kinase (141 aa).

6 residues coordinate ATP: K11, F59, R87, T93, R104, and N114. H117 acts as the Pros-phosphohistidine intermediate in catalysis.

This sequence belongs to the NDK family. As to quaternary structure, homotetramer. Mg(2+) serves as cofactor.

The protein localises to the cytoplasm. The catalysed reaction is a 2'-deoxyribonucleoside 5'-diphosphate + ATP = a 2'-deoxyribonucleoside 5'-triphosphate + ADP. The enzyme catalyses a ribonucleoside 5'-diphosphate + ATP = a ribonucleoside 5'-triphosphate + ADP. In terms of biological role, major role in the synthesis of nucleoside triphosphates other than ATP. The ATP gamma phosphate is transferred to the NDP beta phosphate via a ping-pong mechanism, using a phosphorylated active-site intermediate. The polypeptide is Nucleoside diphosphate kinase (Ralstonia nicotianae (strain ATCC BAA-1114 / GMI1000) (Ralstonia solanacearum)).